The following is a 231-amino-acid chain: MAKISKRAAANKAKVERTKFYPIDEALSLVKECASAKFDESIDVAVQLGIDAKKSDQVVRGSVVLPAGTGKSVRVAVFAQGDKAEQAKAAGAEIVGMEDLAEQIKAGKMDFDVVIASPDTMRVVGTLGQILGPRGLMPNPKVGTVTPDVATAVKNAKAGQVQFRVDKAGIIHATIGRRSFEPAALKSNLAALLDALTKAKPASSKGVYLRKVAVSSTMGVGVRVDQATLAA.

The protein belongs to the universal ribosomal protein uL1 family. Part of the 50S ribosomal subunit.

Its function is as follows. Binds directly to 23S rRNA. The L1 stalk is quite mobile in the ribosome, and is involved in E site tRNA release. Protein L1 is also a translational repressor protein, it controls the translation of the L11 operon by binding to its mRNA. The protein is Large ribosomal subunit protein uL1 of Ralstonia pickettii (strain 12J).